The sequence spans 556 residues: 5-aminolevulinate synthase, mitochondrial (556 aa).

Residues 1–46 (MDSLARQSAKICPFVSRVTSSMQQVQVLHKTNMSAMAQQCPVMRRA) constitute a mitochondrion transit peptide. Substrate-binding residues include R105, S218, and K237. Residues S270, H298, and T342 each coordinate pyridoxal 5'-phosphate. K345 is an active-site residue. At K345 the chain carries N6-(pyridoxal phosphate)lysine. Pyridoxal 5'-phosphate is bound by residues T374 and S375. T460 is a binding site for substrate.

This sequence belongs to the class-II pyridoxal-phosphate-dependent aminotransferase family. In terms of assembly, homodimer. Pyridoxal 5'-phosphate is required as a cofactor.

The protein resides in the mitochondrion matrix. The catalysed reaction is succinyl-CoA + glycine + H(+) = 5-aminolevulinate + CO2 + CoA. The protein operates within porphyrin-containing compound metabolism; protoporphyrin-IX biosynthesis; 5-aminolevulinate from glycine: step 1/1. In terms of biological role, catalyzes the synthesis of 5-aminolevulinate (ALA) from succinyl-CoA and glycine, the first and rate-limiting step in heme biosynthesis. This chain is 5-aminolevulinate synthase, mitochondrial (HEM1), found in Eremothecium gossypii (strain ATCC 10895 / CBS 109.51 / FGSC 9923 / NRRL Y-1056) (Yeast).